The following is a 194-amino-acid chain: Molybdenum cofactor guanylyltransferase (194 aa).

GTP contacts are provided by residues L12–G14, K25, N53, D71, and D101. D101 contacts Mg(2+).

This sequence belongs to the MobA family. Monomer. Mg(2+) serves as cofactor.

It localises to the cytoplasm. It carries out the reaction Mo-molybdopterin + GTP + H(+) = Mo-molybdopterin guanine dinucleotide + diphosphate. Its function is as follows. Transfers a GMP moiety from GTP to Mo-molybdopterin (Mo-MPT) cofactor (Moco or molybdenum cofactor) to form Mo-molybdopterin guanine dinucleotide (Mo-MGD) cofactor. This Escherichia coli O157:H7 protein is Molybdenum cofactor guanylyltransferase.